A 373-amino-acid chain; its full sequence is 3-dehydroquinate synthase (373 aa).

NAD(+) contacts are provided by residues 74–79, 108–112, 132–133, Lys-145, Lys-154, and 172–175; these read DAEAGK, GAATD, TT, and TLET. Zn(2+)-binding residues include Glu-187, His-250, and His-266.

The protein belongs to the sugar phosphate cyclases superfamily. Dehydroquinate synthase family. Co(2+) is required as a cofactor. Requires Zn(2+) as cofactor. The cofactor is NAD(+).

It is found in the cytoplasm. It carries out the reaction 7-phospho-2-dehydro-3-deoxy-D-arabino-heptonate = 3-dehydroquinate + phosphate. It participates in metabolic intermediate biosynthesis; chorismate biosynthesis; chorismate from D-erythrose 4-phosphate and phosphoenolpyruvate: step 2/7. Catalyzes the conversion of 3-deoxy-D-arabino-heptulosonate 7-phosphate (DAHP) to dehydroquinate (DHQ). The protein is 3-dehydroquinate synthase of Nocardia farcinica (strain IFM 10152).